The primary structure comprises 2223 residues: Protein CHROMATIN REMODELING 4 (2223 aa).

Residues 39 to 69 (FDSPEYTSSSKPSKQRLKTDSTPERNSSKRK) form a disordered region. Residues 55 to 69 (LKTDSTPERNSSKRK) show a composition bias toward basic and acidic residues. A PHD-type zinc finger spans residues 75–122 (YFECVICDLGGDLLCCDSCPRTYHTACLNPPLKRIPNGKWICPKCSPN). Composition is skewed to basic and acidic residues over residues 173 to 187 (EKGK…KSTG), 207 to 223 (SADD…DDLG), 248 to 285 (ESKL…ETGK), and 294 to 305 (ELNDGESLERCK). Disordered regions lie at residues 173 to 235 (EKGK…LPSD), 248 to 381 (ESKL…CLED), and 441 to 474 (AEDR…GTEG). The span at 306–315 (TDKKRAKKSL) shows a compositional bias: basic residues. The segment covering 353–368 (ETPEKVKKLPKEERRA) has biased composition (basic and acidic residues). Positions 372–381 (TNKSSSCLED) are enriched in polar residues. Over residues 441–466 (AEDRIDSSSETGKSSRDSRLRDKDMD) the composition is skewed to basic and acidic residues. 2 Chromo domains span residues 531–587 (EEIE…YKAK) and 601–663 (KQPQ…ERNS). The region spanning 701-878 (RRCWHKSKNV…YNLLNFLQPS (178 aa)) is the Helicase ATP-binding domain. 714–721 (DEMGLGKT) is a binding site for ATP. A DEAH box motif is present at residues 829–832 (DEGH). A Nuclear localization signal motif is present at residues 902-909 (LKKLVAPH). The 160-residue stretch at 1008–1167 (LLHSMLKVLH…GSQKEFEDIL (160 aa)) folds into the Helicase C-terminal domain. 6 disordered regions span residues 1268–1300 (EETA…DDVV), 1341–1380 (EAYA…LKEK), 1394–1463 (RRNS…ECLP), 1483–1511 (SESS…FNLP), 1760–1779 (LSSL…SSLF), and 2006–2223 (IPPF…LSDD). Positions 1363-1380 (EPELKKEYTPAGRALKEK) are enriched in basic and acidic residues. The stretch at 1375–1402 (RALKEKFTKLRERQKNLIARRNSVEESL) forms a coiled coil. The span at 1403–1414 (PSGNVDQVTEVA) shows a compositional bias: polar residues. The segment covering 2009–2019 (FVIPEPPPPAP) has biased composition (pro residues). Positions 2025 to 2035 (SLRKKRKRKLH) are enriched in basic residues. Composition is skewed to polar residues over residues 2039–2061 (QKTT…GNPQ), 2075–2096 (GETS…TEPL), and 2128–2148 (TGTT…TINQ). Over residues 2157 to 2171 (DEKVESERTPLHSDE) the composition is skewed to basic and acidic residues. Positions 2189-2215 (IEAESQNTNAEEEAEAQEEDEESMKMV) form a coiled coil. Positions 2198 to 2210 (AEEEAEAQEEDEE) are enriched in acidic residues.

This sequence belongs to the SNF2/RAD54 helicase family.

The protein resides in the nucleus. In terms of biological role, chromatin-remodeling protein that binds DNA through histones and regulates gene transcription. May specifically recognize and bind trimethylated 'Lys-27' (H3K27me3) and non-methylated 'Lys-4' of histone H3. Probable chromatin remodeling factor. The protein is Protein CHROMATIN REMODELING 4 of Arabidopsis thaliana (Mouse-ear cress).